Here is a 421-residue protein sequence, read N- to C-terminus: Aspartokinase (421 aa).

Residue 7–10 (KYGG) participates in ATP binding. Position 25 to 30 (25 to 30 (RIVETK)) interacts with substrate. Ser41 provides a ligand contact to ATP. Substrate contacts are provided by residues 45 to 49 (DTTDD), Glu74, 125 to 126 (LD), 151 to 154 (RGGS), and Ser154. ATP-binding positions include 174 to 175 (TD), 180 to 185 (FTADPR), and Lys210. ACT domains follow at residues 267–348 (VTVV…GKVS) and 349–421 (LIGA…GTGR). Residues Asp274, 274-279 (DVPGYA), 292-294 (NID), Gln298, 360-361 (VT), 374-375 (NI), and 381-382 (SE) contribute to the substrate site.

Belongs to the aspartokinase family. In terms of assembly, heterotetramer consisting of 2 isoforms Alpha (catalytic and regulation) and of a homodimer of 2 isoforms Beta (regulation).

It catalyses the reaction L-aspartate + ATP = 4-phospho-L-aspartate + ADP. The protein operates within amino-acid biosynthesis; L-lysine biosynthesis via DAP pathway; (S)-tetrahydrodipicolinate from L-aspartate: step 1/4. It participates in amino-acid biosynthesis; L-methionine biosynthesis via de novo pathway; L-homoserine from L-aspartate: step 1/3. Its pathway is amino-acid biosynthesis; L-threonine biosynthesis; L-threonine from L-aspartate: step 1/5. With respect to regulation, feedback inhibition by lysine and threonine. In terms of biological role, catalyzes the phosphorylation of the beta-carboxyl group of aspartic acid with ATP to yield 4-phospho-L-aspartate, which is involved in the branched biosynthetic pathway leading to the biosynthesis of amino acids lysine, threonine, isoleucine and methionine. This chain is Aspartokinase (ask), found in Mycolicibacterium smegmatis (Mycobacterium smegmatis).